A 233-amino-acid chain; its full sequence is tRNA (guanine-N(7)-)-methyltransferase (233 aa).

Glu-64, Glu-89, Asp-116, and Asp-138 together coordinate S-adenosyl-L-methionine. Residue Asp-138 is part of the active site. Substrate-binding positions include Lys-142, Asp-174, and 212–215; that span reads TRYE.

The protein belongs to the class I-like SAM-binding methyltransferase superfamily. TrmB family.

The catalysed reaction is guanosine(46) in tRNA + S-adenosyl-L-methionine = N(7)-methylguanosine(46) in tRNA + S-adenosyl-L-homocysteine. It participates in tRNA modification; N(7)-methylguanine-tRNA biosynthesis. Functionally, catalyzes the formation of N(7)-methylguanine at position 46 (m7G46) in tRNA. In Rhizobium johnstonii (strain DSM 114642 / LMG 32736 / 3841) (Rhizobium leguminosarum bv. viciae), this protein is tRNA (guanine-N(7)-)-methyltransferase.